Here is a 49-residue protein sequence, read N- to C-terminus: uncharacterized protein (49 aa).

Belongs to the metallo-dependent hydrolases superfamily. TatD-type hydrolase family. A divalent metal cation serves as cofactor.

This is an uncharacterized protein from Geobacillus stearothermophilus (Bacillus stearothermophilus).